Consider the following 149-residue polypeptide: Large ribosomal subunit protein uL15 (149 aa).

The interval 14–57 is disordered; that stretch reads KQRKRVGRGSGSGWGCTSGKGNKGQNARSGGGVRPGFEGGQMPL. Gly residues-rich tracts occupy residues 21-35 and 42-52; these read RGSGSGWGCTSGKGN and SGGGVRPGFEG.

This sequence belongs to the universal ribosomal protein uL15 family. Part of the 50S ribosomal subunit.

Its function is as follows. Binds to the 23S rRNA. This chain is Large ribosomal subunit protein uL15, found in Oleidesulfovibrio alaskensis (strain ATCC BAA-1058 / DSM 17464 / G20) (Desulfovibrio alaskensis).